Reading from the N-terminus, the 102-residue chain is COX assembly mitochondrial protein 2 homolog (102 aa).

Residues 11–55 form the CHCH domain; sequence TKECNMLIEFLQRCHSEKPIGKMIGKCSYWDEAVWQCTKKERIWR. Short sequence motifs (cx9C motif) lie at residues 14-24 and 37-47; these read CNMLIEFLQRC and CSYWDEAVWQC. 2 disulfide bridges follow: cysteine 14–cysteine 47 and cysteine 24–cysteine 37.

Belongs to the CMC family.

The protein localises to the mitochondrion. Its function is as follows. May be involved in cytochrome c oxidase biogenesis. This Caenorhabditis elegans protein is COX assembly mitochondrial protein 2 homolog.